We begin with the raw amino-acid sequence, 407 residues long: Methylenetetrahydrofolate--tRNA-(uracil-5-)-methyltransferase TrmFO (407 aa).

G9–G14 is an FAD binding site.

This sequence belongs to the MnmG family. TrmFO subfamily. FAD serves as cofactor.

Its subcellular location is the cytoplasm. The enzyme catalyses uridine(54) in tRNA + (6R)-5,10-methylene-5,6,7,8-tetrahydrofolate + NADH + H(+) = 5-methyluridine(54) in tRNA + (6S)-5,6,7,8-tetrahydrofolate + NAD(+). The catalysed reaction is uridine(54) in tRNA + (6R)-5,10-methylene-5,6,7,8-tetrahydrofolate + NADPH + H(+) = 5-methyluridine(54) in tRNA + (6S)-5,6,7,8-tetrahydrofolate + NADP(+). In terms of biological role, catalyzes the folate-dependent formation of 5-methyl-uridine at position 54 (M-5-U54) in all tRNAs. The chain is Methylenetetrahydrofolate--tRNA-(uracil-5-)-methyltransferase TrmFO from Lactobacillus helveticus (strain DPC 4571).